The following is a 104-amino-acid chain: L-rhamnose mutarotase (104 aa).

Y18 is a binding site for substrate. The active-site Proton donor is the H22. Substrate-binding positions include Y41 and 76–77 (WW).

This sequence belongs to the rhamnose mutarotase family. In terms of assembly, homodimer.

It is found in the cytoplasm. It catalyses the reaction alpha-L-rhamnose = beta-L-rhamnose. It participates in carbohydrate metabolism; L-rhamnose metabolism. Its function is as follows. Involved in the anomeric conversion of L-rhamnose. This is L-rhamnose mutarotase from Mannheimia succiniciproducens (strain KCTC 0769BP / MBEL55E).